A 258-amino-acid polypeptide reads, in one-letter code: Thiazole synthase (258 aa).

Residue Lys98 is the Schiff-base intermediate with DXP of the active site. 1-deoxy-D-xylulose 5-phosphate-binding positions include Gly159, Ala185–Gly186, and Asn207–Thr208.

The protein belongs to the ThiG family. As to quaternary structure, homotetramer. Forms heterodimers with either ThiH or ThiS.

The protein localises to the cytoplasm. The enzyme catalyses [ThiS sulfur-carrier protein]-C-terminal-Gly-aminoethanethioate + 2-iminoacetate + 1-deoxy-D-xylulose 5-phosphate = [ThiS sulfur-carrier protein]-C-terminal Gly-Gly + 2-[(2R,5Z)-2-carboxy-4-methylthiazol-5(2H)-ylidene]ethyl phosphate + 2 H2O + H(+). It participates in cofactor biosynthesis; thiamine diphosphate biosynthesis. Catalyzes the rearrangement of 1-deoxy-D-xylulose 5-phosphate (DXP) to produce the thiazole phosphate moiety of thiamine. Sulfur is provided by the thiocarboxylate moiety of the carrier protein ThiS. In vitro, sulfur can be provided by H(2)S. This chain is Thiazole synthase, found in Bacillus cereus (strain ATCC 14579 / DSM 31 / CCUG 7414 / JCM 2152 / NBRC 15305 / NCIMB 9373 / NCTC 2599 / NRRL B-3711).